The chain runs to 96 residues: NADH-ubiquinone oxidoreductase chain 4L (96 aa).

3 helical membrane-spanning segments follow: residues 2–22 (IMFL…FCFV), 28–48 (LLSM…MLFI), and 62–82 (MFLT…VSMI).

It belongs to the complex I subunit 4L family.

Its subcellular location is the mitochondrion membrane. It catalyses the reaction a ubiquinone + NADH + 5 H(+)(in) = a ubiquinol + NAD(+) + 4 H(+)(out). In terms of biological role, core subunit of the mitochondrial membrane respiratory chain NADH dehydrogenase (Complex I) that is believed to belong to the minimal assembly required for catalysis. Complex I functions in the transfer of electrons from NADH to the respiratory chain. The immediate electron acceptor for the enzyme is believed to be ubiquinone. The sequence is that of NADH-ubiquinone oxidoreductase chain 4L (mt:ND4L) from Drosophila nasuta F (Fruit fly).